Here is a 228-residue protein sequence, read N- to C-terminus: Ephrin-A5 (228 aa).

Residues 1–20 (MPHVEMLLLAVAALWVCVRG) form the signal peptide. The Ephrin RBD domain maps to 29–162 (ADRYAVYWNS…KLKVFVRPAN (134 aa)). Residue Asn-37 is glycosylated (N-linked (GlcNAc...) asparagine). Cystine bridges form between Cys-62–Cys-102 and Cys-90–Cys-151. The GPI-anchor amidated asparagine moiety is linked to residue Asn-203. Residues 204-228 (AAQTPRIPIRLLATLLFLLAMLLIL) constitute a propeptide, removed in mature form.

The protein belongs to the ephrin family. Expressed in a graded fashion across the tectum being more strongly expressed towards the posterior pole.

It localises to the cell membrane. In terms of biological role, cell surface GPI-bound ligand for Eph receptors, a family of receptor tyrosine kinases which are crucial for migration, repulsion and adhesion during neuronal, vascular and epithelial development. Binds promiscuously Eph receptors residing on adjacent cells, leading to contact-dependent bidirectional signaling into neighboring cells. Induces compartmentalized signaling within a caveolae-like membrane microdomain when bound to the extracellular domain of its cognate receptor. This signaling event requires the activity of the Fyn tyrosine kinase. Activates the EPHA3 receptor to regulate cell-cell adhesion and cytoskeletal organization. With the receptor EPHA2 may regulate lens fiber cells shape and interactions and be important for lens transparency maintenance. May function actively to stimulate axon fasciculation. Induces growth cone collapse and repulsion of retinal ganglion cell axons. The chain is Ephrin-A5 (EFNA5) from Gallus gallus (Chicken).